Reading from the N-terminus, the 113-residue chain is Large ribosomal subunit protein bL19 (113 aa).

Belongs to the bacterial ribosomal protein bL19 family.

This protein is located at the 30S-50S ribosomal subunit interface and may play a role in the structure and function of the aminoacyl-tRNA binding site. The protein is Large ribosomal subunit protein bL19 (rplS) of Mycobacterium bovis (strain ATCC BAA-935 / AF2122/97).